Consider the following 439-residue polypeptide: Sorting nexin-31 (439 aa).

Residues 1–109 enclose the PX domain; sequence MKMHFCIPVS…EFLTLVQLHT (109 aa). Residues 384–409 form a disordered region; sequence TEQSPEMQIEVPEQGRSKKHPSQPSQ.

It belongs to the sorting nexin family. In terms of assembly, interacts with CCDC22, CCDC93, VPS26C and VPS35L, associates with the retriever and CCC complexes.

May be involved in protein trafficking. The sequence is that of Sorting nexin-31 (Snx31) from Mus musculus (Mouse).